Consider the following 502-residue polypeptide: MAQNESVDVVLVGAGIMSATLAVLLKELDPTLKLEVVEAMDSGAAESSNPWNNAGTGHAGLCELNYTPQAADGSIDIKKAVHINTQFEVSRQFWAYLTKKGNFGSARAFINPVPHLSYVEGDKGVSFLKKRFELLKQHHAFAEMEYTEDKAVMNDWMPLMMPGRPADQHIAATRVAKGTDVNFGALTNKLLKLLGDSPDAQVKYSKKVVGLRRNGSGWTVSIKDVNSGGSREVDARFVFLGAGGAALPLLQLSGIPESKGFGGFPVSGQWLRCDNPEIVKQHQAKVYSQAAVGAPPMSVPHLDTRVVDGKTSLLFGPYAGFTTKFLKHGSLMDLPLSVRMGNIGPMLAVARDNMDLTKYLVSEVMQSMEQRLEALRRFYPQAKAEDWRLEVAGQRVQIIKKDPKKGGVLQFGTELVSAQDGSLAALLGASPGASVTVSIMLELIERCFPEQAKGAWAAKLKEIFPAREKTLATDAALYHKISADNDAALDLAESSPAAKHYA.

Belongs to the MQO family. FAD is required as a cofactor.

The enzyme catalyses (S)-malate + a quinone = a quinol + oxaloacetate. Its pathway is carbohydrate metabolism; tricarboxylic acid cycle; oxaloacetate from (S)-malate (quinone route): step 1/1. This Pseudomonas putida (strain ATCC 47054 / DSM 6125 / CFBP 8728 / NCIMB 11950 / KT2440) protein is Probable malate:quinone oxidoreductase 1.